The sequence spans 505 residues: Peroxisome proliferator-activated receptor gamma (505 aa).

Residues 1 to 26 (MGETLGDSLIDPESDSFADTLSASTS) are disordered. Polar residues predominate over residues 17–26 (FADTLSASTS). Serine 112 bears the Phosphoserine; by MAPK mark. The nuclear receptor DNA-binding region spans 136–210 (AIECRVCGDK…VGMSHNAIRF (75 aa)). 2 consecutive NR C4-type zinc fingers follow at residues 139–159 (CRVCGDKASGFHYGVHACEGC) and 176–198 (CDLNCRIHKKSRNKCQYCRFQKC). Residues 205–280 (HNAIRFGRMP…DKSPFVIYDM (76 aa)) form an interaction with FAM120B region. One can recognise an NR LBD domain in the interval 238–503 (DLRALAKHLY…HPLLQEIYKD (266 aa)). A Glycyl lysine isopeptide (Lys-Gly) (interchain with G-Cter in ubiquitin) cross-link involves residue lysine 252. The 9aaTAD motif lies at 495 to 503 (PLLQEIYKD).

The protein belongs to the nuclear hormone receptor family. NR1 subfamily. In terms of assembly, interacts with FOXO1 (acetylated form). Heterodimer with other nuclear receptors, such as RXRA. The heterodimer with the retinoic acid receptor RXRA is called adipocyte-specific transcription factor ARF6. Interacts with NCOA6 coactivator, leading to a strong increase in transcription of target genes. Interacts with coactivator PPARBP, leading to a mild increase in transcription of target genes. Interacts with NOCA7 in a ligand-inducible manner. Interacts with NCOA1 and NCOA2 LXXLL motifs. Interacts with ASXL1, ASXL2, DNTTIP2, FAM120B, MAP2K1/MEK1, NR0B2, PDPK1, PRDM16, PRMT2 and TGFB1I1. Interacts (when activated by agonist) with PPP5C. Interacts with HELZ2 and THRAP3; the interaction stimulates the transcriptional activity of PPARG. Interacts with PER2, the interaction is ligand dependent and blocks PPARG recruitment to target promoters. Interacts with NOCT. Interacts with ACTN4. Interacts (when in the liganded conformation) with GPS2. Interacts with CRY1 and CRY2 in a ligand-dependent manner. In the absence of hormonal ligand, interacts with TACC1. In macrophages, interacts with PAQR3 and STUB1; the interactions promote PPARG poylubiquitination and STUB1-mediated degradation. In terms of processing, phosphorylated at basal conditions and dephosphorylated when treated with the ligand. May be dephosphorylated by PPP5C. The phosphorylated form may be inactive and dephosphorylation induces adipogenic activity. Ubiquitinated by E3 ubiquitin-protein ligase complex containing FBXO9; leading to proteasomal degradation. Ubiquitinated at Lys-252 by TRIM55 leading to proteasomal degradation. Ubiquitinated by E3 ubiquitin-protein ligase STUB1/CHIP; leading to proteasomal degradation.

It is found in the nucleus. The protein resides in the cytoplasm. Its activity is regulated as follows. PDPK1 activates its transcriptional activity independently of its kinase activity. In terms of biological role, nuclear receptor that binds peroxisome proliferators such as hypolipidemic drugs and fatty acids. Once activated by a ligand, the nuclear receptor binds to DNA specific PPAR response elements (PPRE) and modulates the transcription of its target genes, such as acyl-CoA oxidase. It therefore controls the peroxisomal beta-oxidation pathway of fatty acids. Key regulator of adipocyte differentiation and glucose homeostasis. ARF6 acts as a key regulator of the tissue-specific adipocyte P2 (aP2) enhancer. Acts as a critical regulator of gut homeostasis by suppressing NF-kappa-B-mediated pro-inflammatory responses. Plays a role in the regulation of cardiovascular circadian rhythms by regulating the transcription of BMAL1 in the blood vessels. This is Peroxisome proliferator-activated receptor gamma (PPARG) from Canis lupus familiaris (Dog).